We begin with the raw amino-acid sequence, 90 residues long: U7-theraphotoxin-Hhn1a 2 (90 aa).

Positions 1 to 19 (MKIAIFTVVLALAVFAVLS) are cleaved as a signal peptide. Positions 20–50 (FGWEANEKALSEEFTELIHEKEAASETEARE) are excised as a propeptide. Intrachain disulfides connect cysteine 51-cysteine 65, cysteine 58-cysteine 70, and cysteine 64-cysteine 81.

Belongs to the neurotoxin 10 (Hwtx-1) family. 13 (Hntx-13) subfamily. As to expression, expressed by the venom gland.

The protein resides in the secreted. In terms of biological role, ion channel inhibitor. This chain is U7-theraphotoxin-Hhn1a 2, found in Cyriopagopus hainanus (Chinese bird spider).